The chain runs to 469 residues: MAQTLYDKLWNTHVVHTEDDGTALLYIDRQLLHEVTSPQAFEGLNVAHRPVWRISANLAVSDHNVPTTDRSHGIADPVSKLQVDTLDANCDAFGITQFKMNDVRQGIVHIIGPEQGATLPGMTIVCGDSHTSTHGAFGALAHGIGTSEVEHVLATQTLLQKKSKNMLVKVEGALPRGCTAKDIVLAIIGRIGTAGGTGYAIEFGGSTIRALTMEGRMTVCNMAIEAGARAGMVAVDDTTIDYLKGRPFVPTGAEWDQAVEYWREFKSDEGAQFDRVVELNAAEIVPQVTWGTSPEMVTSIDGRVPDPEREKDPVKRDAMERALAYMALEPNTPMESIKVDKIFIGSCTNARIEDIRAAAYVVKKLNRRIASNVRLAMVVPGSGLVKAQAEREGLDKVFTDAGFEWREPGCSMCLAMNADRLDPGERCASTSNRNFEGRQGAGGRTHLVSPAMAAAAAIEGHFVDIRQLG.

Cys347, Cys410, and Cys413 together coordinate [4Fe-4S] cluster.

This sequence belongs to the aconitase/IPM isomerase family. LeuC type 1 subfamily. Heterodimer of LeuC and LeuD. The cofactor is [4Fe-4S] cluster.

It carries out the reaction (2R,3S)-3-isopropylmalate = (2S)-2-isopropylmalate. The protein operates within amino-acid biosynthesis; L-leucine biosynthesis; L-leucine from 3-methyl-2-oxobutanoate: step 2/4. In terms of biological role, catalyzes the isomerization between 2-isopropylmalate and 3-isopropylmalate, via the formation of 2-isopropylmaleate. The polypeptide is 3-isopropylmalate dehydratase large subunit (Burkholderia ambifaria (strain MC40-6)).